We begin with the raw amino-acid sequence, 928 residues long: Echinoderm microtubule-associated protein-like 4 (928 aa).

Residues 1-189 form a microtubule-binding region; the sequence is MDGFAGSLDD…IPSDVENYDD (189 aa). Residues 14–63 adopt a coiled-coil conformation; that stretch reads AASTSDVQDRLSALELRVQQQEDEITVLKAALADVLRRLAISEDQVATVR. The interval 107–131 is disordered; sequence SAAKSVKRSSTIEKSHNSWDASEES. Over residues 116 to 131 the composition is skewed to basic and acidic residues; that stretch reads STIEKSHNSWDASEES. 13 WD repeats span residues 199–237, 241–288, 296–336, 343–378, 385–424, 442–480, 485–521, 524–563, 567–604, 610–646, 653–692, 702–760, and 767–806; these read LKLE…LFNY, TQRH…VWDS, VIGL…VWDW, AEIK…FWTW, RKQG…IWSK, QISR…MWDH, EREI…LRGT, DGFQ…LWNS, SLEW…VLDA, VSIH…LYNV, YSRY…YWDI, RSDC…LFQY, and APSH…QWRL. The disordered stretch occupies residues 821-928; it reads SSSAVNSPVV…ENQDDSSPLS (108 aa). A compositionally biased stretch (polar residues) spans 836–845; that stretch reads QPNTPTNLPQ. Positions 867–876 are enriched in acidic residues; that stretch reads DALEQPEELN. Residues 877 to 898 show a composition bias toward polar residues; it reads EVQSEKCSSQPEGANGQEPSNE.

It belongs to the WD repeat EMAP family. Homotrimer; self-association is mediated by the N-terminal coiled coil.

The protein localises to the cytoplasm. Its subcellular location is the cytoskeleton. It localises to the spindle. The protein resides in the microtubule organizing center. It is found in the midbody. Its function is as follows. Essential for the formation and stability of microtubules (MTs). Required for the organization of the mitotic spindle and for the proper attachment of kinetochores to MTs. Promotes the recruitment of NUDC to the mitotic spindle for mitotic progression. In Xenopus tropicalis (Western clawed frog), this protein is Echinoderm microtubule-associated protein-like 4 (eml4).